The following is a 387-amino-acid chain: Succinate--CoA ligase [ADP-forming] subunit beta (387 aa).

Residues 9–236 (KELFAKHNVP…RDATDPLELK (228 aa)) form the ATP-grasp domain. Residues lysine 45, 52–54 (GRG), serine 94, and glutamate 99 each bind ATP. Mg(2+) contacts are provided by asparagine 191 and aspartate 205. Residues asparagine 256 and 318 to 320 (GIT) each bind substrate.

This sequence belongs to the succinate/malate CoA ligase beta subunit family. In terms of assembly, heterotetramer of two alpha and two beta subunits. It depends on Mg(2+) as a cofactor.

It carries out the reaction succinate + ATP + CoA = succinyl-CoA + ADP + phosphate. The enzyme catalyses GTP + succinate + CoA = succinyl-CoA + GDP + phosphate. It participates in carbohydrate metabolism; tricarboxylic acid cycle; succinate from succinyl-CoA (ligase route): step 1/1. Functionally, succinyl-CoA synthetase functions in the citric acid cycle (TCA), coupling the hydrolysis of succinyl-CoA to the synthesis of either ATP or GTP and thus represents the only step of substrate-level phosphorylation in the TCA. The beta subunit provides nucleotide specificity of the enzyme and binds the substrate succinate, while the binding sites for coenzyme A and phosphate are found in the alpha subunit. In Mycobacterium sp. (strain JLS), this protein is Succinate--CoA ligase [ADP-forming] subunit beta.